A 390-amino-acid chain; its full sequence is Cyclic amide hydrolase (390 aa).

Positions 1 to 118 (MPNPEASLSP…TVVTQEWVAD (118 aa)) are RU A. Substrate contacts are provided by residues Arg-66 and 97–98 (SG). Residues 127–268 (GLVVGRGHTE…GEVLLLANSA (142 aa)) form an RU B region. Lys-177 is a catalytic residue. Substrate-binding positions include Asn-213, 251–252 (SS), Lys-346, and 365–366 (SG). Ser-251 acts as the Nucleophile in catalysis. The RU C stretch occupies residues 274–390 (LRIGHGITRD…VAAVVRRLPA (117 aa)).

Belongs to the cyclic amide hydrolase (CyAH) family. In terms of assembly, homotetramer; disulfide-linked. The disulfide forms between 2 monomers in the tetramer, such that each tetramer contains 2 sets of vicinal disulfides.

Its function is as follows. Cyclic amide hydrolase of unknown substrate specificity. Catalyzes the hydrolytic ring-opening of a cyclic amide. Does not act on cyanuric acid nor barbituric acid. This is Cyclic amide hydrolase from Pseudofrankia inefficax (strain DSM 45817 / CECT 9037 / DDB 130130 / EuI1c) (Frankia inefficax).